The chain runs to 162 residues: RxLR effector protein PITG_06094 (162 aa).

Residues 1-20 (MRLSFILAATLTGLLACATA) form the signal peptide. The short motif at 51 to 91 (RFLRAYNDAEDDSEDPKNVKNTVDAKPADESEDSELSEEER) is the RxLR-dEER element. Residues 56 to 88 (YNDAEDDSEDPKNVKNTVDAKPADESEDSELSE) are disordered.

This sequence belongs to the RxLR effector family.

The protein localises to the secreted. It localises to the host cytoplasm. The protein resides in the host nucleus. Its subcellular location is the host nucleolus. Its function is as follows. Effector that enhances P.infestans colonization of Nicotiana benthamiana leaves. In Phytophthora infestans (strain T30-4) (Potato late blight agent), this protein is RxLR effector protein PITG_06094.